We begin with the raw amino-acid sequence, 603 residues long: UvrABC system protein C (603 aa).

One can recognise a GIY-YIG domain in the interval 17–94 (TTSGCYKMLN…IKTHKPDYNV (78 aa)).

It belongs to the UvrC family. In terms of assembly, interacts with UvrB in an incision complex.

Its subcellular location is the cytoplasm. Its function is as follows. The UvrABC repair system catalyzes the recognition and processing of DNA lesions. UvrC both incises the 5' and 3' sides of the lesion. The N-terminal half is responsible for the 3' incision and the C-terminal half is responsible for the 5' incision. This is UvrABC system protein C from Borreliella burgdorferi (strain ATCC 35210 / DSM 4680 / CIP 102532 / B31) (Borrelia burgdorferi).